The following is an 83-amino-acid chain: uncharacterized protein (83 aa).

This is an uncharacterized protein from Treponema pallidum (strain Nichols).